The chain runs to 516 residues: Cyclic AMP response element-binding protein A (516 aa).

Ser-75, Ser-79, and Ser-82 each carry phosphoserine. Disordered stretches follow at residues 213 to 237 (KDEP…SQHQ), 294 to 338 (KSEK…HLFA), and 353 to 408 (PAGG…KGST). A compositionally biased stretch (low complexity) spans 221-237 (SSCPASPTSQASSSQHQ). The segment covering 361-392 (RVSRTAASITRSSSGSASASGSSTSSTVTTTR) has biased composition (low complexity). The 64-residue stretch at 441 to 504 (SLKKIRRKIK…ANLLSQLHKL (64 aa)) folds into the bZIP domain. Positions 443 to 463 (KKIRRKIKNKISAQESRRKKK) are basic motif. A leucine-zipper region spans residues 469–476 (LERRVEIL).

This sequence belongs to the bZIP family. May bind DNA as heterodimers with other bZIP proteins. In all cell types examined, including developing salivary gland in embryos and in adults, brain and optic lobe cell bodies, salivary gland, midgut epithelial cells of the cardia, female ovarian columnar follicle cells and male seminal vesicle, ejaculatory duct, and ejaculatory bulb.

Its subcellular location is the nucleus. Its function is as follows. Transcriptional activator. Binds to fat body-specific enhancers of alcohol dehydrogenase (ADH) and yolk protein genes. BBF-2 may play a role in fat body gene expression. It binds the consensus sequence 5'-T[AC]NACGTAN[TG]C-3'. The chain is Cyclic AMP response element-binding protein A (CrebA) from Drosophila melanogaster (Fruit fly).